Here is a 189-residue protein sequence, read N- to C-terminus: Elongation factor P (189 aa).

Belongs to the elongation factor P family.

It is found in the cytoplasm. Its pathway is protein biosynthesis; polypeptide chain elongation. Functionally, involved in peptide bond synthesis. Stimulates efficient translation and peptide-bond synthesis on native or reconstituted 70S ribosomes in vitro. Probably functions indirectly by altering the affinity of the ribosome for aminoacyl-tRNA, thus increasing their reactivity as acceptors for peptidyl transferase. This Xanthobacter autotrophicus (strain ATCC BAA-1158 / Py2) protein is Elongation factor P.